Here is a 255-residue protein sequence, read N- to C-terminus: Triosephosphate isomerase (255 aa).

Residue 9-11 (NWK) coordinates substrate. Residue histidine 95 is the Electrophile of the active site. The Proton acceptor role is filled by glutamate 167. Substrate contacts are provided by residues glycine 173, serine 212, and 233–234 (GG).

This sequence belongs to the triosephosphate isomerase family. Homodimer.

Its subcellular location is the cytoplasm. The catalysed reaction is D-glyceraldehyde 3-phosphate = dihydroxyacetone phosphate. The protein operates within carbohydrate biosynthesis; gluconeogenesis. It participates in carbohydrate degradation; glycolysis; D-glyceraldehyde 3-phosphate from glycerone phosphate: step 1/1. Functionally, involved in the gluconeogenesis. Catalyzes stereospecifically the conversion of dihydroxyacetone phosphate (DHAP) to D-glyceraldehyde-3-phosphate (G3P). This Salmonella agona (strain SL483) protein is Triosephosphate isomerase.